The sequence spans 301 residues: Ornithine carbamoyltransferase (301 aa).

Carbamoyl phosphate-binding positions include Arg-107 and 134 to 137; that span reads HPLQ. Residues Asn-165, Asp-220, and 224–225 each bind L-ornithine; that span reads SM. Residues 260–261 and Arg-288 contribute to the carbamoyl phosphate site; that span reads CL.

It belongs to the aspartate/ornithine carbamoyltransferase superfamily. OTCase family. Homotrimer.

The protein localises to the cytoplasm. The catalysed reaction is carbamoyl phosphate + L-ornithine = L-citrulline + phosphate + H(+). Its pathway is amino-acid biosynthesis; L-arginine biosynthesis; L-arginine from L-ornithine and carbamoyl phosphate: step 1/3. Inhibited by delta-N-phosphonoacetyl-L-ornithine. In terms of biological role, reversibly catalyzes the transfer of the carbamoyl group from carbamoyl phosphate (CP) to the N(epsilon) atom of ornithine (ORN) to produce L-citrulline, which is a substrate for argininosuccinate synthetase, the enzyme involved in the final step in arginine biosynthesis. The chain is Ornithine carbamoyltransferase from Thermus thermophilus (strain ATCC BAA-163 / DSM 7039 / HB27).